A 195-amino-acid chain; its full sequence is Probable WRKY transcription factor 56 (195 aa).

A compositionally biased stretch (polar residues) spans 1–10 (MEGVDNTNPM). 2 disordered regions span residues 1–20 (MEGV…ENNN) and 70–93 (EMGG…KGKG). Residues 108-173 (SDDDVLDDGY…YEGVHNHPCE (66 aa)) constitute a DNA-binding region (WRKY).

This sequence belongs to the WRKY group II-c family.

The protein localises to the nucleus. Functionally, transcription factor. Interacts specifically with the W box (5'-(T)TGAC[CT]-3'), a frequently occurring elicitor-responsive cis-acting element. This chain is Probable WRKY transcription factor 56 (WRKY56), found in Arabidopsis thaliana (Mouse-ear cress).